The chain runs to 353 residues: Outer membrane protein A (353 aa).

A signal peptide spans 1–21; that stretch reads MKKTAIALAVALVGFATVAQA. The next 8 membrane-spanning stretches (beta stranded) occupy residues 27–37, 56–67, 71–79, 97–108, 113–121, 148–157, 162–169, and 188–196; these read TWYTGGKLGWS, QLGAGAFFGYQA, LGFEMGYDW, QGVQLAAKLSYP, LDVYTRLGG, PLVALGAEYA, WATRMEYQ, and LLSVGVSYR. 4 repeat units span residues 208–209, 210–211, 212–213, and 214–215. The interval 208 to 215 is 4 X 2 AA approximate tandem repeats of A-P; that stretch reads APTPAPAP. The region spanning 217-345 is the OmpA-like domain; sequence VDTKRFTLKS…RVEIEVKGYK (129 aa). Residues Cys-318 and Cys-330 are joined by a disulfide bond.

This sequence belongs to the outer membrane OOP (TC 1.B.6) superfamily. OmpA family. As to quaternary structure, monomer and homodimer.

Its subcellular location is the cell outer membrane. Functionally, with TolR probably plays a role in maintaining the position of the peptidoglycan cell wall in the periplasm. Acts as a porin with low permeability that allows slow penetration of small solutes; an internal gate slows down solute passage. The sequence is that of Outer membrane protein A from Yersinia pseudotuberculosis serotype I (strain IP32953).